A 248-amino-acid polypeptide reads, in one-letter code: Octanoyltransferase (248 aa).

The region spanning 53–234 (ADTVDEIWIV…RLIANLDGES (182 aa)) is the BPL/LPL catalytic domain. Residues 93-100 (RGGQITYH), 165-167 (ALG), and 178-180 (GLS) contribute to the substrate site. Cys196 acts as the Acyl-thioester intermediate in catalysis.

Belongs to the LipB family.

Its subcellular location is the cytoplasm. It catalyses the reaction octanoyl-[ACP] + L-lysyl-[protein] = N(6)-octanoyl-L-lysyl-[protein] + holo-[ACP] + H(+). It functions in the pathway protein modification; protein lipoylation via endogenous pathway; protein N(6)-(lipoyl)lysine from octanoyl-[acyl-carrier-protein]: step 1/2. Functionally, catalyzes the transfer of endogenously produced octanoic acid from octanoyl-acyl-carrier-protein onto the lipoyl domains of lipoate-dependent enzymes. Lipoyl-ACP can also act as a substrate although octanoyl-ACP is likely to be the physiological substrate. This Burkholderia multivorans (strain ATCC 17616 / 249) protein is Octanoyltransferase.